The chain runs to 162 residues: Peptide deformylase-like (162 aa).

This sequence belongs to the polypeptide deformylase family.

This is Peptide deformylase-like from Staphylococcus epidermidis (strain ATCC 35984 / DSM 28319 / BCRC 17069 / CCUG 31568 / BM 3577 / RP62A).